Consider the following 170-residue polypeptide: Adenine phosphoribosyltransferase (170 aa).

This sequence belongs to the purine/pyrimidine phosphoribosyltransferase family. As to quaternary structure, homodimer.

It is found in the cytoplasm. It carries out the reaction AMP + diphosphate = 5-phospho-alpha-D-ribose 1-diphosphate + adenine. It participates in purine metabolism; AMP biosynthesis via salvage pathway; AMP from adenine: step 1/1. Functionally, catalyzes a salvage reaction resulting in the formation of AMP, that is energically less costly than de novo synthesis. The chain is Adenine phosphoribosyltransferase from Lactococcus lactis subsp. cremoris (strain MG1363).